The chain runs to 32 residues: Beta-amanitin proprotein (32 aa).

Residues 1 to 10 constitute a propeptide that is removed on maturation; that stretch reads MSDINATRLP. Positions 11-18 form a cross-link, cyclopeptide (Ile-Pro); sequence IWGIGCDP. A cross-link (2'-cysteinyl-6'-hydroxytryptophan sulfoxide (Trp-Cys)) is located at residues 12–16; sequence WGIGC. The propeptide occupies 19 to 32; the sequence is CIGDDVTILLTRGE.

Belongs to the MSDIN fungal toxin family. In terms of processing, processed by the macrocyclase-peptidase enzyme POPB to yield a toxic cyclic decapeptide. POPB first removes 10 residues from the N-terminus. Conformational trapping of the remaining peptide forces the enzyme to release this intermediate rather than proceed to macrocyclization. The enzyme rebinds the remaining peptide in a different conformation and catalyzes macrocyclization of the N-terminal 8 residues.

Toxin belonging to the bicyclic octapeptides amatoxins that acts by binding non-competitively to RNA polymerase II and greatly slowing the elongation of transcripts from target promoters. This chain is Beta-amanitin proprotein, found in Amanita phalloides (Death cap).